We begin with the raw amino-acid sequence, 586 residues long: BTB/POZ domain and ankyrin repeat-containing protein NPR1 (586 aa).

Residues 63–139 (SDADIVVEGI…VYTGKLKPSP (77 aa)) enclose the BTB domain. Residues 142–156 (VSTCVHNVCAHDACR) form a C2HC NPR-type zinc finger. Cys145, Cys150, His152, and Cys155 together coordinate Zn(2+). ANK repeat units lie at residues 266–296 (KRIR…TLDE), 298–325 (NALH…DVNL), and 329–358 (RGYT…RASE). Residues 388 to 522 (EANKDRICID…LDKFIDDDLP (135 aa)) are salicylic acid-binding core (SBC). Arg433 is a salicylate binding site. The disordered stretch occupies residues 561-586 (NLSGLSSSSSTTSPEKIGANQKVREP). Residues 562 to 573 (LSGLSSSSSTTS) show a composition bias toward low complexity.

It belongs to the plant 'ANKYRIN-BTB/POZ' family. 'NPR1-like' subfamily. In terms of tissue distribution, highly expressed in leaves. Expressed at low levels in roots and stems.

It localises to the cytoplasm. It is found in the nucleus. The protein resides in the nuclear body. It participates in protein modification; protein ubiquitination. In terms of biological role, salicylic acid (SA)-binding substrate-specific adapter of an E3 ubiquitin-protein ligase complex (CUL3-RBX1-BTB) which mediates the ubiquitination and subsequent proteasomal degradation of target proteins. Transcription cofactor that represses gene expression in the absence of salicylic acid (SA), when attached to negative cis-elements (W-box) with WRKY transcription factors, but stimulates gene expression upon activation by SA, when sumoylated and attached to positive cis-elements (as-1) with TGA transcription factors, thus confering immunity through a series of gene regulations ending in a significant increase in antimicrobial and defense genes expression. Probable component of the salicylic acid (SA) defense signaling pathway and pathogen-induced systemic acquired resistance (SAR). May be involved in disease resistance against fungal pathogens. May be involved in tolerance to salt and osmotic stresses. The polypeptide is BTB/POZ domain and ankyrin repeat-containing protein NPR1 (Malus hupehensis (Chinese crab apple)).